We begin with the raw amino-acid sequence, 199 residues long: Prolactin-1 (199 aa).

Cystine bridges form between cysteine 4–cysteine 11, cysteine 58–cysteine 174, and cysteine 191–cysteine 199. N-linked (GlcNAc...) asparagine glycosylation occurs at asparagine 60.

This sequence belongs to the somatotropin/prolactin family. Post-translationally, glycosylated.

It localises to the secreted. In Crocodylus novaeguineae (Crocodile), this protein is Prolactin-1.